The sequence spans 446 residues: 3-phosphoshikimate 1-carboxyvinyltransferase (446 aa).

Residues K27, S28, and R32 each coordinate 3-phosphoshikimate. K27 lines the phosphoenolpyruvate pocket. Residues G100 and R128 each contribute to the phosphoenolpyruvate site. Positions 177, 179, 330, and 357 each coordinate 3-phosphoshikimate. Q179 contributes to the phosphoenolpyruvate binding site. Residue D330 is the Proton acceptor of the active site. R361 and R406 together coordinate phosphoenolpyruvate.

This sequence belongs to the EPSP synthase family. Monomer.

It is found in the cytoplasm. The enzyme catalyses 3-phosphoshikimate + phosphoenolpyruvate = 5-O-(1-carboxyvinyl)-3-phosphoshikimate + phosphate. It participates in metabolic intermediate biosynthesis; chorismate biosynthesis; chorismate from D-erythrose 4-phosphate and phosphoenolpyruvate: step 6/7. Its function is as follows. Catalyzes the transfer of the enolpyruvyl moiety of phosphoenolpyruvate (PEP) to the 5-hydroxyl of shikimate-3-phosphate (S3P) to produce enolpyruvyl shikimate-3-phosphate and inorganic phosphate. This is 3-phosphoshikimate 1-carboxyvinyltransferase from Sphingopyxis alaskensis (strain DSM 13593 / LMG 18877 / RB2256) (Sphingomonas alaskensis).